Reading from the N-terminus, the 42-residue chain is uncharacterized protein (42 aa).

A helical transmembrane segment spans residues 15–37 (PLILAVDCAIIIPNTNFIHSFLI).

Its subcellular location is the membrane. This is an uncharacterized protein from Dictyostelium discoideum (Social amoeba).